The following is a 385-amino-acid chain: MEKAFYRDTWAEIDLDAIFYNVQSMKQHVGSHVEVIAVVKANAYGHGDIQVAKTALEAGATRLAVAFLDEALALRKKGISLDVPILVLGATKPQYAPLAASQNIALTVFRADWFEQAIVYAPYEQPLNVHMKLDTGMGRLGAKTKEEVQQMIYAIEQHPSFILEGVYTHFATADEQNIDYFSFQYDTFLHMLEWLSIQPPLIHCANSAAGLRYPDRIFNAVRFGISMYGLAPSQEMKSLLPYPLKEAFSLHSRLTHVKKVKGGEKISYGATYEAETDEWIGTVPIGYADGWLRRMQHFSVLVDGKRAPIVGRVCMDQMMIRLPYELPVGTKVTLIGEQQGDRISVDDVAAHVNTINYEIPCTISYRVPRIFLKNKSIIEVRNAVL.

Lys-40 acts as the Proton acceptor; specific for D-alanine in catalysis. Residue Lys-40 is modified to N6-(pyridoxal phosphate)lysine. Substrate is bound at residue Arg-139. Tyr-268 functions as the Proton acceptor; specific for L-alanine in the catalytic mechanism. Residue Met-315 coordinates substrate.

Belongs to the alanine racemase family. Pyridoxal 5'-phosphate is required as a cofactor.

It catalyses the reaction L-alanine = D-alanine. It participates in amino-acid biosynthesis; D-alanine biosynthesis; D-alanine from L-alanine: step 1/1. In terms of biological role, catalyzes the interconversion of L-alanine and D-alanine. May also act on other amino acids. This Anoxybacillus flavithermus (strain DSM 21510 / WK1) protein is Alanine racemase (alr).